A 146-amino-acid polypeptide reads, in one-letter code: Large ribosomal subunit protein uL13 (146 aa).

The protein belongs to the universal ribosomal protein uL13 family. In terms of assembly, part of the 50S ribosomal subunit.

Functionally, this protein is one of the early assembly proteins of the 50S ribosomal subunit, although it is not seen to bind rRNA by itself. It is important during the early stages of 50S assembly. The chain is Large ribosomal subunit protein uL13 from Sulfurisphaera tokodaii (strain DSM 16993 / JCM 10545 / NBRC 100140 / 7) (Sulfolobus tokodaii).